A 729-amino-acid chain; its full sequence is MLYQGETLQLHWLDNGIAELVFNAPGSVNKLDTRTVASLGEALAVLEKQTELKGLLLRSTKAAFIVGADITEFLSLFAAPAEKLQEWLNFANAIFNRLEDLPVPTISAINGYALGGGCECILATDFRVASPDARIGLPETKLGIMPGFGGSVRLPRLLGNDSALEIIAAGKDVSAKDALKVGLVDAVVAPEKLVEAALKMLQQAIEGKLDWRAYRQPKLEPLKLSPIEAAMSFTTAKGMVMQTAGKHYPAPMTAVKTIEAAARLGRDEALKLETASFVPLARSKEARALVGIFLNDQFVKGQAKKLAKGIEAPKQAAVLGAGIMGGGIAYQSALKGVPVVMKDISDKSLTLGMNEAAKLLNKQLERGKLDGMKMAQVLSTIQPTLDYAGIERAQVIVEAVVENPKIKAAVLSEVEGLIGENTVLASNTSTIPINHLAKSLKRPQNFCGMHFFNPVHRMPLVEIIRGEQTSDSTIAAVVAYASRMGKTPIVVNDCPGFFVNRVLFPYFAGFSMLLRDGADFRQIDKVMEKQFGWPMGPAYLLDVVGIDTAHHAQAVMAAGFPERMGKDYRDAIDVMFDNQRFGQKNQLGFYRYSQDNKGKPRKDNDEQTDVLLAEVSQPRQTISDEEIIARMMIPMINEVVRCLEENIIASPAEADMALVYGIGFPPFHGGAFRYLDTLGTANYVELAQRYAHLGALYQVPAGLRAKAEHNESYYPVAAPLSDVSTGQPA.

The segment at 1 to 189 (MLYQGETLQL…KVGLVDAVVA (189 aa)) is enoyl-CoA hydratase/isomerase. Aspartate 296 provides a ligand contact to substrate. Residues 311–729 (EAPKQAAVLG…LSDVSTGQPA (419 aa)) form a 3-hydroxyacyl-CoA dehydrogenase region. NAD(+) contacts are provided by residues methionine 324, aspartate 343, 400-402 (VVE), lysine 407, and serine 429. The active-site For 3-hydroxyacyl-CoA dehydrogenase activity is histidine 450. An NAD(+)-binding site is contributed by asparagine 453. Positions 500 and 660 each coordinate substrate.

It in the N-terminal section; belongs to the enoyl-CoA hydratase/isomerase family. This sequence in the C-terminal section; belongs to the 3-hydroxyacyl-CoA dehydrogenase family. As to quaternary structure, heterotetramer of two alpha chains (FadB) and two beta chains (FadA).

The catalysed reaction is a (3S)-3-hydroxyacyl-CoA + NAD(+) = a 3-oxoacyl-CoA + NADH + H(+). The enzyme catalyses a (3S)-3-hydroxyacyl-CoA = a (2E)-enoyl-CoA + H2O. It carries out the reaction a 4-saturated-(3S)-3-hydroxyacyl-CoA = a (3E)-enoyl-CoA + H2O. It catalyses the reaction (3S)-3-hydroxybutanoyl-CoA = (3R)-3-hydroxybutanoyl-CoA. The catalysed reaction is a (3Z)-enoyl-CoA = a 4-saturated (2E)-enoyl-CoA. The enzyme catalyses a (3E)-enoyl-CoA = a 4-saturated (2E)-enoyl-CoA. Its pathway is lipid metabolism; fatty acid beta-oxidation. In terms of biological role, involved in the aerobic and anaerobic degradation of long-chain fatty acids via beta-oxidation cycle. Catalyzes the formation of 3-oxoacyl-CoA from enoyl-CoA via L-3-hydroxyacyl-CoA. It can also use D-3-hydroxyacyl-CoA and cis-3-enoyl-CoA as substrate. The polypeptide is Fatty acid oxidation complex subunit alpha (Serratia proteamaculans (strain 568)).